A 324-amino-acid polypeptide reads, in one-letter code: Lipoyl synthase, chloroplastic (324 aa).

Composition is skewed to low complexity over residues 1–12 (MCGPTATTVANA) and 20–29 (KGLPPGLKKP). Positions 1–30 (MCGPTATTVANAGTGGETIKGLPPGLKKPP) are disordered. Cys58, Cys63, Cys69, Cys86, Cys90, Cys93, and Ser302 together coordinate [4Fe-4S] cluster. A Radical SAM core domain is found at 72 to 291 (GDTGTATVML…AYGEEVIGFR (220 aa)).

Belongs to the radical SAM superfamily. Lipoyl synthase family. It depends on [4Fe-4S] cluster as a cofactor.

Its subcellular location is the plastid. The protein localises to the chloroplast. The catalysed reaction is [[Fe-S] cluster scaffold protein carrying a second [4Fe-4S](2+) cluster] + N(6)-octanoyl-L-lysyl-[protein] + 2 oxidized [2Fe-2S]-[ferredoxin] + 2 S-adenosyl-L-methionine + 4 H(+) = [[Fe-S] cluster scaffold protein] + N(6)-[(R)-dihydrolipoyl]-L-lysyl-[protein] + 4 Fe(3+) + 2 hydrogen sulfide + 2 5'-deoxyadenosine + 2 L-methionine + 2 reduced [2Fe-2S]-[ferredoxin]. It functions in the pathway protein modification; protein lipoylation via endogenous pathway; protein N(6)-(lipoyl)lysine from octanoyl-[acyl-carrier-protein]: step 2/2. Catalyzes the radical-mediated insertion of two sulfur atoms into the C-6 and C-8 positions of the octanoyl moiety bound to the lipoyl domains of lipoate-dependent enzymes, thereby converting the octanoylated domains into lipoylated derivatives. This chain is Lipoyl synthase, chloroplastic, found in Ostreococcus lucimarinus (strain CCE9901).